Here is a 272-residue protein sequence, read N- to C-terminus: Cerberus (272 aa).

An N-terminal signal peptide occupies residues 1 to 19 (MSLLLLQLLVLSCLGDTEP). Disulfide bonds link cysteine 168–cysteine 215, cysteine 182–cysteine 229, cysteine 192–cysteine 245, and cysteine 196–cysteine 247. In terms of domain architecture, CTCK spans 168–253 (CRTLPFSQSV…ECNCETQKIE (86 aa)). Asparagine 228 is a glycosylation site (N-linked (GlcNAc...) asparagine).

It belongs to the DAN family.

It is found in the secreted. Cytokine that acts as a regulator of the activity of Nodal/BMP pathways during the establishment of bilateral asymmetry in the head and trunk of the embryo. The chain is Cerberus (CER1) from Gallus gallus (Chicken).